The primary structure comprises 160 residues: 3-dehydroquinate dehydratase (160 aa).

Catalysis depends on Tyr-22, which acts as the Proton acceptor. Substrate contacts are provided by Asn-73, His-79, and Asp-86. The active-site Proton donor is His-99. Substrate contacts are provided by residues 100–101 (IS) and Arg-110.

This sequence belongs to the type-II 3-dehydroquinase family. As to quaternary structure, homododecamer.

The enzyme catalyses 3-dehydroquinate = 3-dehydroshikimate + H2O. It participates in metabolic intermediate biosynthesis; chorismate biosynthesis; chorismate from D-erythrose 4-phosphate and phosphoenolpyruvate: step 3/7. Catalyzes a trans-dehydration via an enolate intermediate. This chain is 3-dehydroquinate dehydratase, found in Campylobacter lari (strain RM2100 / D67 / ATCC BAA-1060).